The chain runs to 132 residues: Histone H2A.1 (132 aa).

The tract at residues methionine 1 to lysine 21 is disordered. Residue serine 2 is modified to N-acetylserine. Lysine 5 and lysine 7 each carry N6-acetyllysine. Glutamine 105 is subject to N5-methylglutamine. At serine 129 the chain carries Phosphoserine. Residues serine 129–glutamine 130 carry the [ST]-Q motif motif.

This sequence belongs to the histone H2A family. The nucleosome is a histone octamer containing two molecules each of H2A, H2B, H3 and H4 assembled in one H3-H4 heterotetramer and two H2A-H2B heterodimers. The octamer wraps approximately 147 bp of DNA. In terms of processing, phosphorylated to form H2AS128ph (gamma-H2A) in response to DNA double-strand breaks (DSBs) generated by exogenous genotoxic agents and by stalled replication forks. Phosphorylation is dependent on the DNA damage checkpoint kinases MEC1/ATR and TEL1/ATM, spreads on either side of a detected DSB site and may mark the surrounding chromatin for recruitment of proteins required for DNA damage signaling and repair. Gamma-H2A is removed from the DNA prior to the strand invasion-primer extension step of the repair process and subsequently dephosphorylated. Dephosphorylation is necessary for efficient recovery from the DNA damage checkpoint. Post-translationally, acetylated by ESA1 to form H2AK4ac and H2AK7ac.

The protein resides in the nucleus. It localises to the chromosome. Functionally, core component of nucleosome which plays a central role in DNA double strand break (DSB) repair. Nucleosomes wrap and compact DNA into chromatin, limiting DNA accessibility to the cellular machineries which require DNA as a template. Histones thereby play a central role in transcription regulation, DNA repair, DNA replication and chromosomal stability. DNA accessibility is regulated via a complex set of post-translational modifications of histones, also called histone code, and nucleosome remodeling. The polypeptide is Histone H2A.1 (HTA1) (Candida albicans (strain SC5314 / ATCC MYA-2876) (Yeast)).